A 254-amino-acid chain; its full sequence is Probable phosphoglycerate mutase 4 (254 aa).

Residues 10–17 (RHGESTWN) and 23–24 (SC) each bind substrate. His11 serves as the catalytic Tele-phosphohistidine intermediate. Residues Ser14 and Ser23 each carry the phosphoserine modification. Position 26 is a phosphotyrosine (Tyr26). Residue Ser31 is modified to Phosphoserine. Substrate is bound by residues Arg62, 89 to 92 (ERHY), and Lys100. The active-site Proton donor/acceptor is the Glu89. Lys106 is modified (N6-acetyllysine). Substrate is bound at residue 116–117 (RR). Position 118 is a phosphoserine (Ser118). 187-188 (GN) is a substrate binding site. The residue at position 251 (Lys251) is an N6-acetyllysine; alternate. Lys251 is subject to N6-succinyllysine; alternate. Residues Lys253 and Lys254 each carry the N6-acetyllysine modification.

The protein belongs to the phosphoglycerate mutase family. BPG-dependent PGAM subfamily.

The catalysed reaction is (2R)-2-phosphoglycerate = (2R)-3-phosphoglycerate. It catalyses the reaction (2R)-3-phospho-glyceroyl phosphate = (2R)-2,3-bisphosphoglycerate + H(+). The chain is Probable phosphoglycerate mutase 4 (PGAM4) from Pan troglodytes (Chimpanzee).